The chain runs to 310 residues: MNIKLTLLVLISIINLMIIQPIQTLAFPIYAQQGYENPREATGRIVCANCHLAQKPIKIEAPKTVLPNSIFEAIVKIPYDTNNKQLLGNGIKGSINTGAVMILPEGFKLAPKNLLSEELREKTKNVYIQPYSTTKDNILLVGPLAGEKNQEIIFPILSPDPSKDKNIHFLKYPIYIGANRGRGQVYPTGDKSNNNPIVSLNTGKVTKIISLEKGGYKIEIEKDNGEIYTENIPQGLNLMVSQGSQVVANQNLTDDPNVGGFGQTEIEIVLQSPSRIKGMIVFFFTVTIAQIFFVLKKKQWEKVQAAEINF.

A signal peptide spans 1–26 (MNIKLTLLVLISIINLMIIQPIQTLA). Heme contacts are provided by F27, C47, C50, and H51. A helical transmembrane segment spans residues 276–296 (IKGMIVFFFTVTIAQIFFVLK).

The protein belongs to the cytochrome f family. The 4 large subunits of the cytochrome b6-f complex are cytochrome b6, subunit IV (17 kDa polypeptide, petD), cytochrome f and the Rieske protein, while the 4 small subunits are PetG, PetL, PetM and PetN. The complex functions as a dimer. Heme serves as cofactor.

The protein resides in the plastid. It is found in the chloroplast thylakoid membrane. Functionally, component of the cytochrome b6-f complex, which mediates electron transfer between photosystem II (PSII) and photosystem I (PSI), cyclic electron flow around PSI, and state transitions. This chain is Cytochrome f, found in Gracilaria tenuistipitata var. liui (Red alga).